Here is a 186-residue protein sequence, read N- to C-terminus: Elongation factor P (186 aa).

Belongs to the elongation factor P family.

It localises to the cytoplasm. It functions in the pathway protein biosynthesis; polypeptide chain elongation. Functionally, involved in peptide bond synthesis. Stimulates efficient translation and peptide-bond synthesis on native or reconstituted 70S ribosomes in vitro. Probably functions indirectly by altering the affinity of the ribosome for aminoacyl-tRNA, thus increasing their reactivity as acceptors for peptidyl transferase. The polypeptide is Elongation factor P (Shewanella loihica (strain ATCC BAA-1088 / PV-4)).